The following is an 84-amino-acid chain: Esculentin-1Vb (84 aa).

Residues 1–22 form the signal peptide; sequence MFTLKKPLLLIVLLGIISLSLC. Positions 23-36 are excised as a propeptide; the sequence is EQERNADEDEESET. A disulfide bond links cysteine 78 and cysteine 84.

Expressed by the skin glands.

It is found in the secreted. Its function is as follows. Antimicrobial peptide. The protein is Esculentin-1Vb of Odorrana versabilis (Chinese bamboo leaf odorous frog).